Consider the following 1076-residue polypeptide: Bifunctional glutamine synthetase adenylyltransferase/adenylyl-removing enzyme (1076 aa).

Residues 1–521 (MESSIFKPSS…LHLDIYYRPM (521 aa)) form an adenylyl removase region. An adenylyl transferase region spans residues 524-1076 (VNAQMENDQI…LERNRRRAQR (553 aa)). The segment covering 1042–1056 (TATASAATQQPQTAP) has biased composition (low complexity). A disordered region spans residues 1042–1076 (TATASAATQQPQTAPRPRMHVIAPRLERNRRRAQR).

This sequence belongs to the GlnE family. Mg(2+) serves as cofactor.

The enzyme catalyses [glutamine synthetase]-O(4)-(5'-adenylyl)-L-tyrosine + phosphate = [glutamine synthetase]-L-tyrosine + ADP. It catalyses the reaction [glutamine synthetase]-L-tyrosine + ATP = [glutamine synthetase]-O(4)-(5'-adenylyl)-L-tyrosine + diphosphate. In terms of biological role, involved in the regulation of glutamine synthetase GlnA, a key enzyme in the process to assimilate ammonia. When cellular nitrogen levels are high, the C-terminal adenylyl transferase (AT) inactivates GlnA by covalent transfer of an adenylyl group from ATP to specific tyrosine residue of GlnA, thus reducing its activity. Conversely, when nitrogen levels are low, the N-terminal adenylyl removase (AR) activates GlnA by removing the adenylyl group by phosphorolysis, increasing its activity. The regulatory region of GlnE binds the signal transduction protein PII (GlnB) which indicates the nitrogen status of the cell. In Bifidobacterium longum (strain DJO10A), this protein is Bifunctional glutamine synthetase adenylyltransferase/adenylyl-removing enzyme.